The chain runs to 435 residues: ATP-dependent RNA helicase SUB2 (435 aa).

A disordered region spans residues Met1 to Asp40. Residues Glu7–Glu17 show a composition bias toward acidic residues. The segment covering Ala19–Gly33 has biased composition (low complexity). The Q motif motif lies at Thr51 to Gln79. Positions Ile82–Ile257 constitute a Helicase ATP-binding domain. Ala95 to Thr102 provides a ligand contact to ATP. Positions Asp204–Asp207 match the DECD box motif. One can recognise a Helicase C-terminal domain in the interval Gly269–Ser430.

This sequence belongs to the DEAD box helicase family. DECD subfamily.

Its subcellular location is the nucleus. It catalyses the reaction ATP + H2O = ADP + phosphate + H(+). ATP-binding RNA helicase involved in transcription elongation and required for the export of mRNA out of the nucleus. SUB2 also plays a role in pre-mRNA splicing and spliceosome assembly. May be involved in rDNA and telomeric silencing, and maintenance of genome integrity. This is ATP-dependent RNA helicase SUB2 (SUB2) from Debaryomyces hansenii (strain ATCC 36239 / CBS 767 / BCRC 21394 / JCM 1990 / NBRC 0083 / IGC 2968) (Yeast).